The sequence spans 217 residues: Probable GTP-binding protein EngB (217 aa).

Positions 32–205 (GTPQIAFAGR…RKIVYSLIET (174 aa)) constitute an EngB-type G domain. GTP contacts are provided by residues 40-47 (GRSNAGKS), 67-71 (GKTKL), 85-88 (DLPG), 152-155 (TKID), and 184-186 (VSN). Mg(2+)-binding residues include S47 and T69.

The protein belongs to the TRAFAC class TrmE-Era-EngA-EngB-Septin-like GTPase superfamily. EngB GTPase family. Mg(2+) serves as cofactor.

Its function is as follows. Necessary for normal cell division and for the maintenance of normal septation. This Leptospira interrogans serogroup Icterohaemorrhagiae serovar copenhageni (strain Fiocruz L1-130) protein is Probable GTP-binding protein EngB.